A 467-amino-acid polypeptide reads, in one-letter code: Serine/threonine-protein phosphatase 2A 56 kDa regulatory subunit epsilon isoform (467 aa).

The interval 1–40 is disordered; that stretch reads MSSAPTTPPSVDKVDGFSRKSVRKARQKRSQSSSQFRSQG. Ser2 is subject to N-acetylserine. A Phosphothreonine modification is found at Thr7. Residues 20–29 show a composition bias toward basic residues; sequence KSVRKARQKR. 3 positions are modified to phosphoserine: Ser30, Ser32, and Ser34. The span at 30 to 40 shows a compositional bias: low complexity; that stretch reads SQSSSQFRSQG.

Belongs to the phosphatase 2A regulatory subunit B56 family. As to quaternary structure, found in a complex with at least ARL2, PPP2CB; PPP2R1A, PPP2R2A, PPP2R5E and TBCD. PP2A consists of a common heterodimeric core enzyme, composed of a 36 kDa catalytic subunit (subunit C) and a 65 kDa constant regulatory subunit (PR65 or subunit A), that associates with a variety of regulatory subunits. Proteins that associate with the core dimer include three families of regulatory subunits B (the R2/B/PR55/B55, R3/B''/PR72/PR130/PR59 and R5/B'/B56 families), the 48 kDa variable regulatory subunit, viral proteins, and cell signaling molecules. Interacts with SGO1. Phosphorylated on serine residues.

The protein resides in the cytoplasm. The B regulatory subunit might modulate substrate selectivity and catalytic activity, and might also direct the localization of the catalytic enzyme to a particular subcellular compartment. The polypeptide is Serine/threonine-protein phosphatase 2A 56 kDa regulatory subunit epsilon isoform (PPP2R5E) (Homo sapiens (Human)).